We begin with the raw amino-acid sequence, 619 residues long: MSVRPQNDFDGKAFAAQLSTAPGVYRMYAGDDTLLYVGKAGALRKRVGSYFNGTPKNARLTSMLSQVARMDVTVTRSEAEALLLENQLIKSLSPRYNVSLRDDKSYPYVLLTREQWPRIALHRGPRAVQGRYFGPYTGVTGVRETLSLMHKLFKLRSCEDSVFRNRSRPCLQYQIGRCSGPCVDLVAAPDYAESVRRATMFLEGKSDQLGEEIMHSMQQASEALEFERAARLRDLLSSLRSMQNRQYVDGRAADLDVLACATQSSQACVLLLSFRDGRNLGTRSFFPKTNGEDSADEILGAFVSQYYAEHSPPREILLDREIPEAELIEAALSTAAEHKVALKWNVRGERAGYLLLATRNAQLTLVTELTSQSAQHARSEALRELLGLAEPVKRVECFDISHTMGEATVASCVVFDASGPVRGQYRRFNISGITPGDDYAAMRQAIERRFRRAVEENGVIPDVLLIDGGAGQLAQAQAALADLGVENVLLVGVAKGEERRAGHEALIMADGRELRPGAASPALQFIQQVRDEAHRFAITGHRGRRQKARMTSKLEDIPGIGPRRRASLLKHFGGLVGLKAAGEAEIARVEGVNAALAARIYANLHGLALPDAAGEASPQ.

Residues 20-98 enclose the GIY-YIG domain; it reads TAPGVYRMYA…IKSLSPRYNV (79 aa). In terms of domain architecture, UVR spans 207–242; that stretch reads DQLGEEIMHSMQQASEALEFERAARLRDLLSSLRSM.

The protein belongs to the UvrC family. Interacts with UvrB in an incision complex.

The protein resides in the cytoplasm. In terms of biological role, the UvrABC repair system catalyzes the recognition and processing of DNA lesions. UvrC both incises the 5' and 3' sides of the lesion. The N-terminal half is responsible for the 3' incision and the C-terminal half is responsible for the 5' incision. In Xanthomonas axonopodis pv. citri (strain 306), this protein is UvrABC system protein C.